The primary structure comprises 314 residues: Malate dehydrogenase (314 aa).

NAD(+)-binding positions include 11-16 (GSGNIG) and Asp-35. The substrate site is built by Arg-84 and Arg-90. NAD(+) is bound by residues Asn-97 and 120 to 122 (ITN). 2 residues coordinate substrate: Asn-122 and Arg-153. The active-site Proton acceptor is His-177.

Belongs to the LDH/MDH superfamily. MDH type 3 family.

The catalysed reaction is (S)-malate + NAD(+) = oxaloacetate + NADH + H(+). Catalyzes the reversible oxidation of malate to oxaloacetate. The polypeptide is Malate dehydrogenase (Rickettsia bellii (strain OSU 85-389)).